The primary structure comprises 60 residues: MSNLLKSALEKERRHYSEKLYQIGVYNKEVMNKMTISELRKEYAYFFRSITNHKNYPYTR.

The chain is Stress response protein YkoL (ykoL) from Bacillus subtilis (strain 168).